The primary structure comprises 211 residues: uncharacterized protein (211 aa).

The stretch at 105–143 (IEENEFDKVRKSSDKLINEIEKTKSSLREDVKTALSEVR) forms a coiled coil. A helical membrane pass occupies residues 191 to 211 (QWFTGFVGVVSSVVLIILFYF).

Belongs to the CCDC90 family.

The protein localises to the mitochondrion. The protein resides in the membrane. This is an uncharacterized protein from Schizosaccharomyces pombe (strain 972 / ATCC 24843) (Fission yeast).